Consider the following 692-residue polypeptide: Elongation factor G (692 aa).

The tr-type G domain occupies 8–282 (EKTRNIGIMA…AVIDYLPSPL (275 aa)). Residues 17–24 (AHVDAGKT), 81–85 (DTPGH), and 135–138 (NKMD) each bind GTP.

This sequence belongs to the TRAFAC class translation factor GTPase superfamily. Classic translation factor GTPase family. EF-G/EF-2 subfamily.

The protein localises to the cytoplasm. Catalyzes the GTP-dependent ribosomal translocation step during translation elongation. During this step, the ribosome changes from the pre-translocational (PRE) to the post-translocational (POST) state as the newly formed A-site-bound peptidyl-tRNA and P-site-bound deacylated tRNA move to the P and E sites, respectively. Catalyzes the coordinated movement of the two tRNA molecules, the mRNA and conformational changes in the ribosome. This is Elongation factor G from Streptococcus agalactiae serotype III (strain NEM316).